The primary structure comprises 461 residues: Alkaline phosphatase 4 (461 aa).

Positions methionine 1 to alanine 41 are cleaved as a signal peptide. Aspartate 58 is a Mg(2+) binding site. Aspartate 58 provides a ligand contact to Zn(2+). Residue serine 108 is the Phosphoserine intermediate of the active site. Residues threonine 161 and glutamate 282 each coordinate Mg(2+). The Zn(2+) site is built by aspartate 287, histidine 291, aspartate 329, histidine 330, and histidine 423.

The protein belongs to the alkaline phosphatase family. Monomer. Mg(2+) is required as a cofactor. Zn(2+) serves as cofactor.

It catalyses the reaction a phosphate monoester + H2O = an alcohol + phosphate. The sequence is that of Alkaline phosphatase 4 (phoA) from Bacillus subtilis (strain 168).